The primary structure comprises 461 residues: Photosynthetic NDH subunit of subcomplex B 1, chloroplastic (461 aa).

The transit peptide at 1–44 directs the protein to the chloroplast; it reads MASSLPLLPKPISPFFKTPPFSTSKPLVFLNFQTRLTSRSSDVS. The segment at 66-90 is disordered; that stretch reads NEYGSLFADGKQDEDPRPPDNPDNP. A compositionally biased stretch (basic and acidic residues) spans 75-85; that stretch reads GKQDEDPRPPD.

As to quaternary structure, part of the chloroplast NDH complex, composed of a mixture of chloroplast and nucleus encoded subunits. Component of the NDH subcomplex B, at least composed of PnsB1, PnsB2, PnsB3, PnsB4 and PnsB5.

It localises to the plastid. It is found in the chloroplast thylakoid membrane. Its function is as follows. NDH shuttles electrons from NAD(P)H:plastoquinone, via FMN and iron-sulfur (Fe-S) centers, to quinones in the photosynthetic chain and possibly in a chloroplast respiratory chain. The immediate electron acceptor for the enzyme in this species is believed to be plastoquinone. Couples the redox reaction to proton translocation, and thus conserves the redox energy in a proton gradient. This Arabidopsis thaliana (Mouse-ear cress) protein is Photosynthetic NDH subunit of subcomplex B 1, chloroplastic.